Consider the following 251-residue polypeptide: Octanoyltransferase (251 aa).

The BPL/LPL catalytic domain maps to 49-230 (DEIPDQLLIL…ALDDALAGRL (182 aa)). Residues 87–94 (RGGRITWH), 160–162 (AIG), and 173–175 (GVA) each bind substrate. Cys191 functions as the Acyl-thioester intermediate in the catalytic mechanism.

The protein belongs to the LipB family.

It is found in the cytoplasm. It catalyses the reaction octanoyl-[ACP] + L-lysyl-[protein] = N(6)-octanoyl-L-lysyl-[protein] + holo-[ACP] + H(+). It functions in the pathway protein modification; protein lipoylation via endogenous pathway; protein N(6)-(lipoyl)lysine from octanoyl-[acyl-carrier-protein]: step 1/2. In terms of biological role, catalyzes the transfer of endogenously produced octanoic acid from octanoyl-acyl-carrier-protein onto the lipoyl domains of lipoate-dependent enzymes. Lipoyl-ACP can also act as a substrate although octanoyl-ACP is likely to be the physiological substrate. The polypeptide is Octanoyltransferase (Corynebacterium glutamicum (strain R)).